Reading from the N-terminus, the 58-residue chain is Large ribosomal subunit protein uL30 (58 aa).

The protein belongs to the universal ribosomal protein uL30 family. As to quaternary structure, part of the 50S ribosomal subunit.

In Pseudomonas entomophila (strain L48), this protein is Large ribosomal subunit protein uL30.